The primary structure comprises 362 residues: N-acylethanolamine-hydrolyzing acid amidase (362 aa).

The first 33 residues, 1 to 33 (MGTLATRAACHGAHLALALLLLLSLSGPWLSAV), serve as a signal peptide directing secretion. 2 N-linked (GlcNAc...) asparagine glycosylation sites follow: Asn42 and Asn112. Cys131 acts as the Nucleophile in catalysis. Residues Asn314 and Asn338 are each glycosylated (N-linked (GlcNAc...) asparagine).

This sequence belongs to the acid ceramidase family. In terms of assembly, heterodimer of an alpha and a beta subunit, produced by autocatalytic cleavage. In terms of processing, N-glycosylated. Tunicamycin treatment causes a reduction in specific activity against N-palmitoylethanolamine. Autoproteolytic cleavage at pH 4.5 gives rise to the alpha and beta subunit. Cleavage gives rise to a conformation change that activates the enzyme. The same catalytic Cys residue mediates the autoproteolytic cleavage and subsequent hydrolysis of lipid substrates.

Its subcellular location is the lysosome. The protein localises to the membrane. The catalysed reaction is N-hexadecanoylethanolamine + H2O = ethanolamine + hexadecanoate. It carries out the reaction an N-(long-chain fatty acyl)ethanolamine + H2O = a long-chain fatty acid + ethanolamine. It catalyses the reaction N-dodecanoylethanolamine + H2O = dodecanoate + ethanolamine. The enzyme catalyses N-tetradecanoylethanolamine + H2O = tetradecanoate + ethanolamine. The catalysed reaction is an N-acylsphing-4-enine + H2O = sphing-4-enine + a fatty acid. It carries out the reaction N-hexadecanoylsphing-4-enine + H2O = sphing-4-enine + hexadecanoate. It catalyses the reaction N-dodecanoylsphing-4-enine + H2O = dodecanoate + sphing-4-enine. It functions in the pathway lipid metabolism; fatty acid metabolism. Degrades bioactive fatty acid amides to their corresponding acids, with the following preference: N-palmitoylethanolamine &gt; N-myristoylethanolamine &gt; N-stearoylethanolamine &gt; N-oleoylethanolamine &gt; N-linoleoylethanolamine &gt; N-arachidonoylethanolamine. This is N-acylethanolamine-hydrolyzing acid amidase from Mus musculus (Mouse).